Reading from the N-terminus, the 578-residue chain is L-ascorbate oxidase (578 aa).

The signal sequence occupies residues 1–28 (MASLGFLFFFLLPLILLELSSSRSVMAA). Plastocyanin-like domains lie at 30 to 149 (TRHF…LIVE) and 161 to 328 (DGEF…NYLP). The Cu cation site is built by histidine 87, histidine 89, histidine 131, and histidine 133. 2 cysteine pairs are disulfide-bonded: cysteine 108/cysteine 565 and cysteine 207/cysteine 221. N-linked (GlcNAc...) asparagine glycosylation is present at asparagine 206. Residues asparagine 349, asparagine 394, asparagine 438, and asparagine 451 are each glycosylated (N-linked (GlcNAc...) asparagine). Positions 372–550 (HRRIILLNTQ…HMGMGVIFAE (179 aa)) constitute a Plastocyanin-like 3 domain. Histidine 472, histidine 475, histidine 477, histidine 533, cysteine 534, histidine 535, histidine 539, and methionine 544 together coordinate Cu cation.

The protein belongs to the multicopper oxidase family. In terms of assembly, dimer. It depends on Cu cation as a cofactor. As to expression, highly expressed in young and growing tissues.

The protein localises to the secreted. The catalysed reaction is 4 L-ascorbate + O2 = 4 monodehydro-L-ascorbate radical + 2 H2O. May be involved in a redox system involving ascorbic acid. The chain is L-ascorbate oxidase (AAO) from Nicotiana tabacum (Common tobacco).